The following is a 419-amino-acid chain: Structure-specific endonuclease subunit slx4 (419 aa).

This sequence belongs to the SLX4 family. In terms of assembly, forms a heterodimer with slx1. Post-translationally, phosphorylated in response to DNA damage.

The protein localises to the nucleus. It localises to the nucleolus. In terms of biological role, regulatory subunit of the slx1-slx4 structure-specific endonuclease that resolves DNA secondary structures generated during DNA repair and recombination. Has endonuclease activity towards branched DNA substrates, introducing single-strand cuts in duplex DNA close to junctions with ss-DNA. Has a preference for stem-loop (SL) and splayed arm Y structures. Introduces a single-strand cut in duplex DNA on the 3' side of a double-strand/single-strand junction with respect to the single-strand moving 3' to 5' away from the junction. Plays a critical role in maintaining the integrity of the ribosomal DNA (rDNA) loci, where it has a role in re-starting stalled replication forks. The complex initiates homologous recombination (HR) events, used to maintain rDNA copy number, in the rDNA repeats that are processed by a mechanism that requires rad22, but not rhp51. Has Holliday junction resolvase activity in vitro. Slx4 is required for efficient processing of DNA substrates. The chain is Structure-specific endonuclease subunit slx4 from Schizosaccharomyces pombe (strain 972 / ATCC 24843) (Fission yeast).